Reading from the N-terminus, the 340-residue chain is Predicted GPI-anchored protein 46 (340 aa).

Positions 1-29 are cleaved as a signal peptide; it reads MKILLIYSMTPKLVIWFTLFVLCLQMGDT. A compositionally biased stretch (low complexity) spans 99–115; that stretch reads SETTTTTTQESETSIAT. 2 disordered regions span residues 99-154 and 181-212; these read SETT…SLSS and MSSSSSSSSGSLRDKSKLKQENKQLQSRIKNY. Asn127 carries N-linked (GlcNAc...) asparagine glycosylation. The span at 182–191 shows a compositional bias: low complexity; that stretch reads SSSSSSSSGS. Positions 192–202 are enriched in basic and acidic residues; sequence LRDKSKLKQEN. Asn270 carries an N-linked (GlcNAc...) asparagine glycan. A lipid anchor (GPI-anchor amidated asparagine) is attached at Asn314. Residues 315–340 constitute a propeptide, removed in mature form; the sequence is SAPLLWIKISKPTVCLVIALTFLLLG.

It localises to the cell membrane. The protein localises to the secreted. This chain is Predicted GPI-anchored protein 46 (PGA46), found in Candida albicans (strain SC5314 / ATCC MYA-2876) (Yeast).